A 343-amino-acid polypeptide reads, in one-letter code: Anthranilate phosphoribosyltransferase (343 aa).

Residues G84, 87–88 (GD), T92, 94–97 (NIST), 112–120 (KHGNRSVSS), and S124 each bind 5-phospho-alpha-D-ribose 1-diphosphate. G84 is a binding site for anthranilate. S96 is a binding site for Mg(2+). N115 contributes to the anthranilate binding site. Position 170 (R170) interacts with anthranilate. Residues D229 and E230 each contribute to the Mg(2+) site.

The protein belongs to the anthranilate phosphoribosyltransferase family. In terms of assembly, homodimer. It depends on Mg(2+) as a cofactor.

It catalyses the reaction N-(5-phospho-beta-D-ribosyl)anthranilate + diphosphate = 5-phospho-alpha-D-ribose 1-diphosphate + anthranilate. Its pathway is amino-acid biosynthesis; L-tryptophan biosynthesis; L-tryptophan from chorismate: step 2/5. Catalyzes the transfer of the phosphoribosyl group of 5-phosphorylribose-1-pyrophosphate (PRPP) to anthranilate to yield N-(5'-phosphoribosyl)-anthranilate (PRA). The protein is Anthranilate phosphoribosyltransferase of Stenotrophomonas maltophilia (strain R551-3).